The primary structure comprises 531 residues: Bifunctional aspartate aminotransferase and L-aspartate beta-decarboxylase (531 aa).

Residues Gly114 and Asn255 each contribute to the L-aspartate site. Lys314 carries the N6-(pyridoxal phosphate)lysine modification. Position 496 (Arg496) interacts with L-aspartate.

Belongs to the class-I pyridoxal-phosphate-dependent aminotransferase family. In terms of assembly, homododecamer. It depends on pyridoxal 5'-phosphate as a cofactor.

The catalysed reaction is L-aspartate + H(+) = L-alanine + CO2. It carries out the reaction L-aspartate + 2-oxoglutarate = oxaloacetate + L-glutamate. With respect to regulation, inhibited by 10 mM Co(2+), Mn(2+) and Ni(2+), and by 1 mM Cu(2+) and Hg(2+). Bifunctional enzyme that has both L-aspartate decarboxylase and transaminase activity. Has high activity with L-aspartate, and much lower activity with D-aspartate, L-lysine and L-glutamine. This Pseudomonas sp protein is Bifunctional aspartate aminotransferase and L-aspartate beta-decarboxylase.